The following is a 295-amino-acid chain: 33 kDa chaperonin (295 aa).

Intrachain disulfides connect Cys-238–Cys-240 and Cys-271–Cys-274.

The protein belongs to the HSP33 family. Under oxidizing conditions two disulfide bonds are formed involving the reactive cysteines. Under reducing conditions zinc is bound to the reactive cysteines and the protein is inactive.

It is found in the cytoplasm. Redox regulated molecular chaperone. Protects both thermally unfolding and oxidatively damaged proteins from irreversible aggregation. Plays an important role in the bacterial defense system toward oxidative stress. This Clostridium botulinum (strain Eklund 17B / Type B) protein is 33 kDa chaperonin.